A 1192-amino-acid chain; its full sequence is Probable inactive serine/threonine-protein kinase DDB_G0280131 (1192 aa).

5 disordered regions span residues 23-90 (STIN…NLNE), 144-189 (DSSI…SQQD), 201-236 (VSIS…TTTA), 301-406 (SIPT…FKDS), and 478-499 (DLDD…NNNK). The segment covering 26–43 (NLNNNNSNNNNNNNNNGN) has biased composition (low complexity). Positions 44–60 (SATKISFQEQMPNGNGN) are enriched in polar residues. Low complexity-rich tracts occupy residues 61 to 73 (SSTT…QQSA) and 154 to 175 (SSYL…SNNN). A compositionally biased stretch (pro residues) spans 201 to 232 (VSISLPPPPTTEELPLPPPSTEELQLPPPPPT). Residues 301–324 (SIPTPIVTPSTTTSTNTTTAATVN) are compositionally biased toward low complexity. The segment covering 325 to 338 (KLNASKSPNGTLTT) has biased composition (polar residues). The span at 362-376 (PTLSSPSPSQSAAPQ) shows a compositional bias: low complexity. Residues 377 to 391 (PAAPQPTPTSQPQPP) are compositionally biased toward pro residues. 2 stretches are compositionally biased toward low complexity: residues 392-402 (TTTVSTPVSPT) and 485-498 (NKNN…NNNN). Positions 521–783 (AQPSDIIGSG…ILKILRQPLH (263 aa)) constitute a Protein kinase domain. ATP is bound by residues 527–535 (IGSGNNGTT) and Lys549. The tract at residues 790–831 (KPTQQQQQQQQQDQQQQQPEQQLTSSTSSTSTQDSLVSQEQV) is disordered. A compositionally biased stretch (low complexity) spans 791–828 (PTQQQQQQQQQDQQQQQPEQQLTSSTSSTSTQDSLVSQ).

This sequence belongs to the protein kinase superfamily. TKL Ser/Thr protein kinase family.

This chain is Probable inactive serine/threonine-protein kinase DDB_G0280131, found in Dictyostelium discoideum (Social amoeba).